We begin with the raw amino-acid sequence, 420 residues long: Serine hydroxymethyltransferase (420 aa).

(6S)-5,6,7,8-tetrahydrofolate is bound by residues L121 and 125–127 (GHL). K230 is modified (N6-(pyridoxal phosphate)lysine). (6S)-5,6,7,8-tetrahydrofolate contacts are provided by residues E246 and 354 to 356 (SPF).

It belongs to the SHMT family. As to quaternary structure, homodimer. Pyridoxal 5'-phosphate serves as cofactor.

The protein localises to the cytoplasm. The enzyme catalyses (6R)-5,10-methylene-5,6,7,8-tetrahydrofolate + glycine + H2O = (6S)-5,6,7,8-tetrahydrofolate + L-serine. Its pathway is one-carbon metabolism; tetrahydrofolate interconversion. It participates in amino-acid biosynthesis; glycine biosynthesis; glycine from L-serine: step 1/1. In terms of biological role, catalyzes the reversible interconversion of serine and glycine with tetrahydrofolate (THF) serving as the one-carbon carrier. This reaction serves as the major source of one-carbon groups required for the biosynthesis of purines, thymidylate, methionine, and other important biomolecules. Also exhibits THF-independent aldolase activity toward beta-hydroxyamino acids, producing glycine and aldehydes, via a retro-aldol mechanism. The chain is Serine hydroxymethyltransferase from Rickettsia canadensis (strain McKiel).